A 331-amino-acid chain; its full sequence is Protoheme IX farnesyltransferase (331 aa).

The next 9 membrane-spanning stretches (helical) occupy residues 22-42, 50-70, 100-120, 147-167, 174-194, 220-240, 241-261, 273-293, and 307-327; these read LVKP…MWMA, FGVT…INMV, FAGI…NLLA, IVIG…AATG, WVMF…LAIL, ILLY…PLHV, LGSF…WKAV, ATSL…AMGL, and LASL…LGAM.

Belongs to the UbiA prenyltransferase family. Protoheme IX farnesyltransferase subfamily.

The protein localises to the cell inner membrane. The enzyme catalyses heme b + (2E,6E)-farnesyl diphosphate + H2O = Fe(II)-heme o + diphosphate. The protein operates within porphyrin-containing compound metabolism; heme O biosynthesis; heme O from protoheme: step 1/1. Functionally, converts heme B (protoheme IX) to heme O by substitution of the vinyl group on carbon 2 of heme B porphyrin ring with a hydroxyethyl farnesyl side group. The sequence is that of Protoheme IX farnesyltransferase from Synechococcus sp. (strain JA-3-3Ab) (Cyanobacteria bacterium Yellowstone A-Prime).